The following is a 611-amino-acid chain: Methionine--tRNA ligase (611 aa).

Positions 12 to 22 match the 'HIGH' region motif; the sequence is PYANGPRHIGH. Residues C144, C147, C157, and C160 each coordinate Zn(2+). The short motif at 348–352 is the 'KMSKS' region element; it reads KFSSS. An ATP-binding site is contributed by S351.

This sequence belongs to the class-I aminoacyl-tRNA synthetase family. MetG type 1 subfamily. As to quaternary structure, monomer. Zn(2+) serves as cofactor.

It is found in the cytoplasm. The catalysed reaction is tRNA(Met) + L-methionine + ATP = L-methionyl-tRNA(Met) + AMP + diphosphate. In terms of biological role, is required not only for elongation of protein synthesis but also for the initiation of all mRNA translation through initiator tRNA(fMet) aminoacylation. This is Methionine--tRNA ligase from Corynebacterium urealyticum (strain ATCC 43042 / DSM 7109).